The following is a 580-amino-acid chain: Cytochrome c oxidase subunit 1 (580 aa).

A disordered region spans residues 1–25 (MTAVAPRVDGHVAPQRPEPTGHARK). A helical membrane pass occupies residues 43-63 (IMYIIMSFSFFFLGGLMALLI). His-87 provides a ligand contact to Fe(II)-heme a. 6 consecutive transmembrane segments (helical) span residues 90–110 (VMLL…VLPL), 122–142 (LNAF…AGFL), 171–191 (MWII…INML), 214–234 (IFVT…AALG), 259–279 (LFWF…FGII), and 292–312 (FGYI…MAVW). Cu cation is bound by residues His-265 and Tyr-269. Residues 265–269 (HPEVY) constitute a cross-link (1'-histidyl-3'-tyrosine (His-Tyr)). Positions 314 and 315 each coordinate Cu cation. 2 helical membrane passes run 316-336 (MFVT…LISV) and 360-380 (MIWA…GIML). His-398 serves as a coordination point for heme a3. Transmembrane regions (helical) follow at residues 399 to 419 (FHYT…YFWF), 434 to 454 (IHFW…HWLG), and 477 to 497 (ISTI…WNVF). His-400 is a binding site for Fe(II)-heme a.

It belongs to the heme-copper respiratory oxidase family. As to quaternary structure, associates with subunits II, III and IV to form cytochrome c oxidase. Requires Cu(2+) as cofactor. Heme serves as cofactor.

It localises to the cell membrane. The enzyme catalyses 4 Fe(II)-[cytochrome c] + O2 + 8 H(+)(in) = 4 Fe(III)-[cytochrome c] + 2 H2O + 4 H(+)(out). The protein operates within energy metabolism; oxidative phosphorylation. Functionally, cytochrome c oxidase is the component of the respiratory chain that catalyzes the reduction of oxygen to water. Subunits 1-3 form the functional core of the enzyme complex. CO I is the catalytic subunit of the enzyme. Electrons originating in cytochrome c are transferred via the copper A center of subunit 2 and heme A of subunit 1 to the bimetallic center formed by heme A3 and copper B. The protein is Cytochrome c oxidase subunit 1 (ctaD) of Corynebacterium efficiens (strain DSM 44549 / YS-314 / AJ 12310 / JCM 11189 / NBRC 100395).